A 525-amino-acid chain; its full sequence is Ubiquitin carboxyl-terminal hydrolase 22 (525 aa).

The UBP-type zinc-finger motif lies at 21-138 (PGCSHLGSFK…KEEQRKAWKM (118 aa)). Positions 23, 25, 63, 66, 76, 79, 84, 89, 93, 99, 112, and 115 each coordinate Zn(2+). Lysine 129 bears the N6-acetyllysine mark. Position 147 is a phosphothreonine; by CDK1 (threonine 147). In terms of domain architecture, USP spans 176 to 520 (RGLINLGNTC…EGYLLFYHKQ (345 aa)). Cysteine 185 (nucleophile) is an active-site residue. Serine 237 is modified (phosphoserine; by CDK1). Histidine 479 acts as the Proton acceptor in catalysis.

It belongs to the peptidase C19 family. UBP8 subfamily. Component of some SAGA transcription coactivator-HAT complexes, at least composed of ATXN7, ATXN7L3, ENY2, GCN5L2, SUPT3H, TAF10, TRRAP and USP22. Within the SAGA complex, ATXN7L3, ENY2 and USP22 form a subcomplex required for histone deubiquitination. Interacts directly with ATXN7L3; leading to its recruitment to the SAGA complex. Interacts with ATXN7L3 and weakly with ATXN7L3B. Interacts with MED1. Post-translationally, phosphorylated in G2/M phase, but not in G1 phase by CDK1. In terms of processing, ubiquitinated and subsequently degraded in a CDC20-dependent manner. In terms of tissue distribution, moderately expressed in various tissues including heart and skeletal muscle, and weakly expressed in lung and liver.

It localises to the nucleus. It is found in the cytoplasm. It carries out the reaction Thiol-dependent hydrolysis of ester, thioester, amide, peptide and isopeptide bonds formed by the C-terminal Gly of ubiquitin (a 76-residue protein attached to proteins as an intracellular targeting signal).. In terms of biological role, deubiquitinase that plays a role in several cellular processes including transcriptional regulation, cell cycle progression or innate immunity. As part of the transcription regulatory histone acetylation (HAT) complex SAGA, catalyzes the deubiquitination of both histones H2A and H2B, thereby acting as a transcriptional coactivator. Recruited to specific gene promoters by activators such as MYC, where it is required for transcription. Facilitates cell-cycle progression by stabilizing CCNB1 and antagonizing its proteasome-mediated degradation in a cell cycle-specific manner. Modulates cell cycle progression and apoptosis also by antagonizing TP53 transcriptional activation through deacetylase SIRT1 stabilization. Plays multiple roles in immunity and inflammation. Participates in antiviral response by deubiquitinating the importin KPNA2, leading to IRF3 nuclear translocation and subsequent type I interferon production. Acts as a central regulator of type III IFN signaling by negatively regulating STING1 activation and ubiquitination. Inhibits NLRP3 inflammasome activation by promoting NLRP3 degradation through ATG5-dependent autophagy. Deubiquitinates CD274 to induce its stabilization and thereby participates in maintenance of immune tolerance to self. Controls necroptotic cell death by regulating RIPK3 phosphorylation and ubiquitination. During bacterial infection, promotes pro-inflammatory response by targeting TRAF6 and removing its 'Lys-48'-linked polyubiquitination. The chain is Ubiquitin carboxyl-terminal hydrolase 22 (USP22) from Homo sapiens (Human).